A 397-amino-acid chain; its full sequence is Lysophospholipid transporter LplT (397 aa).

Topologically, residues 1-17 are periplasmic; that stretch reads MSESVHTNTSLWSKGMK. A helical transmembrane segment spans residues 18 to 38; sequence AVIVAQFLSAFGDNALLFATL. Residues 39 to 52 lie on the Cytoplasmic side of the membrane; sequence ALLKAQFYPEWSQP. Residues 53–73 traverse the membrane as a helical segment; it reads VLQMVFVGAYILFAPFVGQVA. Over 74–90 the chain is Periplasmic; sequence DSFAKGRVMMFANGLKL. The chain crosses the membrane as a helical span at residues 91–111; that stretch reads LGAASICFGFNPFVGYTLVGI. At 112 to 144 the chain is on the cytoplasmic side; it reads GAAAYSPAKYGILGELTTGDKLVKANGLMEAST. Residues 145–165 form a helical membrane-spanning segment; it reads IAAILLGSVAGGVLADLHVLV. A topological domain (periplasmic) is located at residue A166. Residues 167-187 traverse the membrane as a helical segment; sequence LAACALAYAGAVAANIYIPKL. Residues 188 to 226 are Cytoplasmic-facing; that stretch reads AAARPGQSWNVLKMTCSFKSACTSLWQNGETRFSLVGTS. A helical membrane pass occupies residues 227 to 247; it reads LFWGAGVTLRFLLVLWVPVAL. Topologically, residues 248 to 256 are periplasmic; it reads GITDNATPT. Residues 257-277 traverse the membrane as a helical segment; sequence YLNAMVAIGIVLGAGAAAKLV. Over 278–280 the chain is Cytoplasmic; sequence TLE. Residues 281–301 traverse the membrane as a helical segment; the sequence is TVSRCMPAGILIGVVVLFFSL. The Periplasmic segment spans residues 302–304; that stretch reads QHE. A helical transmembrane segment spans residues 305-325; the sequence is LLPAYALLMLIGVLGGFFVVP. The Cytoplasmic portion of the chain corresponds to 326-343; sequence LNALLQERGKKSVGAGNA. The chain crosses the membrane as a helical span at residues 344–364; sequence IAVQNLGENSAMLLMLGIYSL. Residues 365–366 are Periplasmic-facing; sequence AV. A helical membrane pass occupies residues 367-387; it reads LVGIPVVPIGIGFGTLFALAI. Residues 388-397 are Cytoplasmic-facing; sequence TALWIWQRRH.

This sequence belongs to the major facilitator superfamily. LplT (TC 2.A.1.42) family.

The protein resides in the cell inner membrane. Catalyzes the facilitated diffusion of 2-acyl-glycero-3-phosphoethanolamine (2-acyl-GPE) into the cell. This chain is Lysophospholipid transporter LplT, found in Escherichia fergusonii (strain ATCC 35469 / DSM 13698 / CCUG 18766 / IAM 14443 / JCM 21226 / LMG 7866 / NBRC 102419 / NCTC 12128 / CDC 0568-73).